A 697-amino-acid chain; its full sequence is tRNA 5-methylaminomethyl-2-thiouridine biosynthesis bifunctional protein MnmC (697 aa).

The tRNA (mnm(5)s(2)U34)-methyltransferase stretch occupies residues 1 to 272 (MPKPASMAMN…KREMLTAVMS (272 aa)). Residues 300-697 (IGAGVAGLLT…HKHKTRQAVI (398 aa)) form an FAD-dependent cmnm(5)s(2)U34 oxidoreductase region.

The protein in the N-terminal section; belongs to the methyltransferase superfamily. tRNA (mnm(5)s(2)U34)-methyltransferase family. It in the C-terminal section; belongs to the DAO family. FAD serves as cofactor.

Its subcellular location is the cytoplasm. The catalysed reaction is 5-aminomethyl-2-thiouridine(34) in tRNA + S-adenosyl-L-methionine = 5-methylaminomethyl-2-thiouridine(34) in tRNA + S-adenosyl-L-homocysteine + H(+). Its function is as follows. Catalyzes the last two steps in the biosynthesis of 5-methylaminomethyl-2-thiouridine (mnm(5)s(2)U) at the wobble position (U34) in tRNA. Catalyzes the FAD-dependent demodification of cmnm(5)s(2)U34 to nm(5)s(2)U34, followed by the transfer of a methyl group from S-adenosyl-L-methionine to nm(5)s(2)U34, to form mnm(5)s(2)U34. The polypeptide is tRNA 5-methylaminomethyl-2-thiouridine biosynthesis bifunctional protein MnmC (Psychrobacter cryohalolentis (strain ATCC BAA-1226 / DSM 17306 / VKM B-2378 / K5)).